An 89-amino-acid polypeptide reads, in one-letter code: Small ribosomal subunit protein uS15 (89 aa).

The protein belongs to the universal ribosomal protein uS15 family. Part of the 30S ribosomal subunit. Forms a bridge to the 50S subunit in the 70S ribosome, contacting the 23S rRNA.

Its function is as follows. One of the primary rRNA binding proteins, it binds directly to 16S rRNA where it helps nucleate assembly of the platform of the 30S subunit by binding and bridging several RNA helices of the 16S rRNA. Functionally, forms an intersubunit bridge (bridge B4) with the 23S rRNA of the 50S subunit in the ribosome. The chain is Small ribosomal subunit protein uS15 from Azoarcus sp. (strain BH72).